Consider the following 419-residue polypeptide: Light-independent protochlorophyllide reductase subunit N (419 aa).

Positions 20, 45, and 102 each coordinate [4Fe-4S] cluster.

Belongs to the BchN/ChlN family. In terms of assembly, protochlorophyllide reductase is composed of three subunits; BchL, BchN and BchB. Forms a heterotetramer of two BchB and two BchN subunits. [4Fe-4S] cluster serves as cofactor.

It catalyses the reaction chlorophyllide a + oxidized 2[4Fe-4S]-[ferredoxin] + 2 ADP + 2 phosphate = protochlorophyllide a + reduced 2[4Fe-4S]-[ferredoxin] + 2 ATP + 2 H2O. Its pathway is porphyrin-containing compound metabolism; bacteriochlorophyll biosynthesis (light-independent). Component of the dark-operative protochlorophyllide reductase (DPOR) that uses Mg-ATP and reduced ferredoxin to reduce ring D of protochlorophyllide (Pchlide) to form chlorophyllide a (Chlide). This reaction is light-independent. The NB-protein (BchN-BchB) is the catalytic component of the complex. This Chlorobaculum tepidum (strain ATCC 49652 / DSM 12025 / NBRC 103806 / TLS) (Chlorobium tepidum) protein is Light-independent protochlorophyllide reductase subunit N.